The chain runs to 419 residues: MGIPDSTTDSRHSLSSAALSSASFENIYDPARKNESTNDVIDNHTDTEIDDHDNDHENLDSNNNNENNEAFNEKAAEKKLLPWYRRYFIWILIFIVALICSVLIGVLGGVLGHRTAVRDRHPSYKAKTYSLVKEYKGTTFFDGFDFMNITDPTHGFVQYLDRNSSAKLGLISANSSNVIMAADSKHNYSSGRPSIRLQSTQYFEHGLFILDLIHLPYGCGTWPAFWTLGDDWPNGGEIDIVEGVNVGTSNQVTLHTGDGCEMEDIKRVMTGTALQTNCWVDAPNSYNAGCGVENPSGPSYGEAFNKNGGGVFVLDWRSEGIRSWFFNRSEIPSDITSGSPQPAKWSEPVADFPDTKCDIDKMFSKQKILFDLTFCGDWAGSSVYSSAGCPGSCNDFVGNNPHNFTEAYWNIKSLAVYQY.

Disordered regions lie at residues 1–20 and 29–67; these read MGIP…AALS and DPAR…NNEN. Residues 30–59 are compositionally biased toward basic and acidic residues; it reads PARKNESTNDVIDNHTDTEIDDHDNDHENL. The helical transmembrane segment at 88 to 108 threads the bilayer; sequence FIWILIFIVALICSVLIGVLG. Positions 122–387 constitute a GH16 domain; that stretch reads PSYKAKTYSL…WAGSSVYSSA (266 aa). Residue Glu-237 is the Nucleophile of the active site. Glu-242 (proton donor) is an active-site residue.

It belongs to the glycosyl hydrolase 16 family.

It localises to the membrane. The chain is Probable glycosidase C21B10.07 from Schizosaccharomyces pombe (strain 972 / ATCC 24843) (Fission yeast).